The chain runs to 314 residues: Zinc transporter ZIP3 (314 aa).

Residues 1–3 (MVK) are Extracellular-facing. A helical transmembrane segment spans residues 4–24 (LLVAKILCMVGMFFFMLLGSL). Topologically, residues 25 to 42 (LPVKIIEMDFEKAHRSKK) are cytoplasmic. Residues 43 to 63 (ILSLCNTFGGGVFLATCFNAL) traverse the membrane as a helical segment. Topologically, residues 64–85 (LPAVREKLKEVLTLAHISTDYP) are extracellular. A helical membrane pass occupies residues 86–106 (LAETIMLLGFFMTVFLEQLVL). The Cytoplasmic segment spans residues 107 to 169 (TFRKERPAFI…QELSRSSPLR (63 aa)). Residues serine 125 and serine 129 each carry the phosphoserine modification. A helical transmembrane segment spans residues 170–190 (LLSLVFALSAHSVFEGLALGL). The Extracellular segment spans residues 191-196 (QEEGEK). The helical transmembrane segment at 197 to 217 (VVSLFVGVAIHETLVAVALGI) threads the bilayer. Over 218 to 229 (NMARSAMALRDA) the chain is Cytoplasmic. A helical transmembrane segment spans residues 230 to 250 (AKLAVTVSAMIPLGISLGLGI). The Extracellular segment spans residues 251-262 (DSAQGMPSSVAS). The helical transmembrane segment at 263-283 (VLLQGLAGGTFLFVTFFEILA) threads the bilayer. Residues 284–292 (KELEEKSDR) lie on the Cytoplasmic side of the membrane. The helical transmembrane segment at 293-313 (LLKVLFLVLGYTVLAGMVFIK) threads the bilayer. Tryptophan 314 is a topological domain (extracellular).

It belongs to the ZIP transporter (TC 2.A.5) family.

The protein resides in the cell membrane. The protein localises to the apical cell membrane. It catalyses the reaction Zn(2+)(in) = Zn(2+)(out). Its function is as follows. Transporter for the divalent cation Zn(2+). Mediates the influx of Zn(2+) into cells from extracellular space. Controls Zn(2+) accumulation into dentate gyrus granule cells in the hippocampus. Mediates Zn(2+) reuptake from the secreted milk within the alveolar lumen. The chain is Zinc transporter ZIP3 (SLC39A3) from Bos taurus (Bovine).